The following is a 461-amino-acid chain: Argininosuccinate lyase (461 aa).

This sequence belongs to the lyase 1 family. Argininosuccinate lyase subfamily.

It localises to the cytoplasm. It carries out the reaction 2-(N(omega)-L-arginino)succinate = fumarate + L-arginine. It functions in the pathway amino-acid biosynthesis; L-arginine biosynthesis; L-arginine from L-ornithine and carbamoyl phosphate: step 3/3. The polypeptide is Argininosuccinate lyase (Nitrosomonas europaea (strain ATCC 19718 / CIP 103999 / KCTC 2705 / NBRC 14298)).